Here is a 295-residue protein sequence, read N- to C-terminus: MNGGSDLKHATGSGSDPKHAAEMDPDSDAGQVAVALAYQRFEPRAYLRNNYAPPRGDLSNPDGVGPWKLRCMAQVFATGEVSGRVLIDIGSGPTIYQLLSACAHFEDITMTDFLEVNRQELGLWLREEPGAFDWSVYSQHACLIEDKGESWQEKERQLRARVKRVLPIDVHKPQPLGTPSLVPLPADALVSAFCLEAVSPDLTSFQRALHHITTLLRPGGHLLLIGALEESWYLAGEARLSVVPVSEEEVREALVLGGYEVRELRTYIMPAHLCTGVDDVKGIFFAWAQKMEVQV.

The tract at residues 1 to 26 (MNGGSDLKHATGSGSDPKHAAEMDPD) is disordered. Tandem repeats lie at residues 4–10 (GSDLKHA) and 14–20 (GSDPKHA). The segment at 4 to 20 (GSDLKHATGSGSDPKHA) is 2 X 7 AA repeats of G-S-D-[LP]-K-H-A. S-adenosyl-L-methionine contacts are provided by residues Y46, Y51, 90 to 91 (GS), Y96, D112, N117, 169 to 170 (DV), and A192. Residues E230 and D278 each coordinate octopamine.

The protein belongs to the class I-like SAM-binding methyltransferase superfamily. NNMT/PNMT/TEMT family. Brain (pons and medulla oblongata), adrenal gland, retina and heart.

The enzyme catalyses phenylethanolamine + S-adenosyl-L-methionine = N-methylphenylethanolamine + S-adenosyl-L-homocysteine + H(+). It catalyses the reaction (R)-noradrenaline + S-adenosyl-L-methionine = (R)-adrenaline + S-adenosyl-L-homocysteine + H(+). It carries out the reaction (R)-normetanephrine + S-adenosyl-L-methionine = (R)-metanephrine + S-adenosyl-L-homocysteine + H(+). The catalysed reaction is (R)-octopamine + S-adenosyl-L-methionine = (R)-synephrine + S-adenosyl-L-homocysteine + H(+). Its pathway is catecholamine biosynthesis; (R)-adrenaline biosynthesis; (R)-adrenaline from (R)-noradrenaline: step 1/1. Its function is as follows. Catalyzes the transmethylation of nonepinephrine (noradrenaline) to form epinephrine (adrenaline), using S-adenosyl-L-methionine as the methyl donor. Other substrates include phenylethanolamine, octopamine and normetanephrine. This chain is Phenylethanolamine N-methyltransferase (Pnmt), found in Mus musculus (Mouse).